We begin with the raw amino-acid sequence, 713 residues long: U3 small nucleolar RNA-associated protein 8 (713 aa).

Threonine 95 is subject to Phosphothreonine. 2 positions are modified to phosphoserine: serine 148 and serine 150.

In terms of assembly, interacts with snoRNA U3. Interacts with MPP10 and UTP25. Component of the ribosomal small subunit (SSU) processome composed of at least 40 protein subunits and snoRNA U3. In the absence of snoRNA3, forms a complex with other t-UTPs. This complex can associate with pre-18S ribosomal RNAs.

The protein localises to the nucleus. Its subcellular location is the nucleolus. Involved in nucleolar processing of pre-18S ribosomal RNA. Also has a role in nuclear tRNA export. It acts between the steps of tRNA maturation/aminoacylation and its subsequent translocation out of the nucleus. Required for optimal pre-ribosomal RNA transcription by RNA polymerase I together with a subset of U3 proteins required for transcription (t-UTPs). In Saccharomyces cerevisiae (strain ATCC 204508 / S288c) (Baker's yeast), this protein is U3 small nucleolar RNA-associated protein 8 (UTP8).